The primary structure comprises 465 residues: Probable spore coat protein DDB_G0283555 (465 aa).

A signal peptide spans 1 to 22 (MRINNLLVCLVLVFSTLSISNA). In terms of domain architecture, DSCP-N spans 35 to 153 (RNCDSLSEDQ…RYPVCKGGGG (119 aa)). 7 consecutive Follistatin-like domains span residues 160-182 (PCKNVICPEDYCCQDIHGGAYCV), 195-217 (LCKAIKCGRGKECIVKDGKACCV), 229-251 (LCDAVQCPKGFNCVEFGGTANCV), 257-280 (ECEHHHCPPGYDCVVDSHHRPHCQ), 287-309 (LCRNVTCPYGYVCKAINNLPTCI), 318-340 (PCRDLHCPSGYSCEIINDLPSCV), and 435-458 (LCEFVKCSPGTKCVADTTGIPVCL).

In terms of biological role, may contribute to the structure of the coat at the interface between the middle, cellulosic layer and the outer, electron-dense, proteinaceous layer. The protein is Probable spore coat protein DDB_G0283555 of Dictyostelium discoideum (Social amoeba).